The following is a 1069-amino-acid chain: Degenerin-like protein del-10 (1069 aa).

At 1-95 (MVRMAERLAE…LNAASPVTRG (95 aa)) the chain is on the cytoplasmic side. Residues 96–116 (LWCMIIIAFVILVLVQCYSQI) traverse the membrane as a helical segment. Over 117–830 (KLYISEPVAT…FWSLACDIGG (714 aa)) the chain is Extracellular. N-linked (GlcNAc...) asparagine glycosylation is found at Asn-216, Asn-290, Asn-374, Asn-454, Asn-539, Asn-545, and Asn-584. Residues 831-851 (ALGLFLGASLLTIIEIVYLCI) traverse the membrane as a helical segment. At 852 to 1069 (QYGLCGKRAR…EEDDDKHSYV (218 aa)) the chain is on the cytoplasmic side. Disordered regions lie at residues 898 to 948 (KKSQ…TLTP) and 960 to 1069 (RNSQ…HSYV). The segment covering 915-928 (GDKFRSRASSEESK) has biased composition (basic and acidic residues). The span at 938 to 948 (NDPSGNSTLTP) shows a compositional bias: polar residues. Residues 967–978 (YHDDHHPEDHYY) are compositionally biased toward basic and acidic residues.

Belongs to the amiloride-sensitive sodium channel (TC 1.A.6) family.

It is found in the membrane. The sequence is that of Degenerin-like protein del-10 from Caenorhabditis elegans.